Reading from the N-terminus, the 582-residue chain is ATP-dependent lipid A-core flippase (582 aa).

5 helical membrane passes run 16–36 (LWPM…ALIL), 63–83 (ILVW…VSGF), 153–173 (IIGL…ILVV), 253–273 (PLIQ…ASFP), and 275–295 (VMET…IALM). The ABC transmembrane type-1 domain occupies 28-310 (IVAAIALILN…LTNVNAQFQR (283 aa)). Positions 342–578 (IAFDHVTFSY…QGVYAQLHQL (237 aa)) constitute an ABC transporter domain. 376–383 (GRSGSGKS) provides a ligand contact to ATP.

This sequence belongs to the ABC transporter superfamily. Lipid exporter (TC 3.A.1.106) family. As to quaternary structure, homodimer.

The protein localises to the cell inner membrane. It carries out the reaction ATP + H2O + lipid A-core oligosaccharideSide 1 = ADP + phosphate + lipid A-core oligosaccharideSide 2.. Its function is as follows. Involved in lipopolysaccharide (LPS) biosynthesis. Translocates lipid A-core from the inner to the outer leaflet of the inner membrane. Transmembrane domains (TMD) form a pore in the inner membrane and the ATP-binding domain (NBD) is responsible for energy generation. This Sodalis glossinidius (strain morsitans) protein is ATP-dependent lipid A-core flippase.